The primary structure comprises 594 residues: UvrABC system protein C (594 aa).

In terms of domain architecture, GIY-YIG spans 14–91 (DQPGCYLMKD…IKKYDPKYNI (78 aa)). The region spanning 196-231 (KEVRSELEIKMYEASEKLEFERAKELRDQIAHIDAI) is the UVR domain.

This sequence belongs to the UvrC family. In terms of assembly, interacts with UvrB in an incision complex.

Its subcellular location is the cytoplasm. Functionally, the UvrABC repair system catalyzes the recognition and processing of DNA lesions. UvrC both incises the 5' and 3' sides of the lesion. The N-terminal half is responsible for the 3' incision and the C-terminal half is responsible for the 5' incision. The polypeptide is UvrABC system protein C (Bacillus cereus (strain B4264)).